A 97-amino-acid chain; its full sequence is Large ribosomal subunit protein bL28 (97 aa).

Belongs to the bacterial ribosomal protein bL28 family.

The sequence is that of Large ribosomal subunit protein bL28 from Rickettsia canadensis (strain McKiel).